A 505-amino-acid chain; its full sequence is RNA-splicing ligase RtcB homolog (505 aa).

Mn(2+)-binding residues include aspartate 119, cysteine 122, histidine 227, and histidine 259. 226-230 serves as a coordination point for GMP; that stretch reads NHYAE. Serine 300 is modified (phosphoserine). Histidine 353 is a binding site for Mn(2+). GMP is bound by residues 353-354, 402-405, serine 409, and 428-431; these read HN, GGTM, and HGAG. The active-site GMP-histidine intermediate is histidine 428. Lysine 496 participates in a covalent cross-link: Glycyl lysine isopeptide (Lys-Gly) (interchain with G-Cter in SUMO2). Lysine 504 serves as a coordination point for GMP.

Belongs to the RtcB family. In terms of assembly, catalytic component of the tRNA-splicing ligase complex. The cofactor is Mn(2+).

It localises to the nucleus. The protein resides in the cytoplasm. It catalyses the reaction a 3'-end 3'-phospho-ribonucleotide-RNA + a 5'-end dephospho-ribonucleoside-RNA + GTP = a ribonucleotidyl-ribonucleotide-RNA + GMP + diphosphate. The enzyme catalyses a 3'-end 2',3'-cyclophospho-ribonucleotide-RNA + a 5'-end dephospho-ribonucleoside-RNA + GTP + H2O = a ribonucleotidyl-ribonucleotide-RNA + GMP + diphosphate + H(+). Its activity is regulated as follows. Protein archease stimulates the activity of the tRNA ligase complex with high efficiency in the presence of GTP. Its function is as follows. Catalytic subunit of the tRNA-splicing ligase complex that acts by directly joining spliced tRNA halves to mature-sized tRNAs by incorporating the precursor-derived splice junction phosphate into the mature tRNA as a canonical 3',5'-phosphodiester. May act as an RNA ligase with broad substrate specificity, and may function toward other RNAs. In Homo sapiens (Human), this protein is RNA-splicing ligase RtcB homolog.